The chain runs to 353 residues: Methionine import ATP-binding protein MetN (353 aa).

The ABC transporter domain occupies 7-249; the sequence is LENIDVTFKQ…PKEELSRQFV (243 aa). 41 to 48 lines the ATP pocket; it reads GYSGAGKS.

This sequence belongs to the ABC transporter superfamily. Methionine importer (TC 3.A.1.24) family. In terms of assembly, the complex is composed of two ATP-binding proteins (MetN), two transmembrane proteins (MetI) and a solute-binding protein (MetQ).

It is found in the cell membrane. The enzyme catalyses L-methionine(out) + ATP + H2O = L-methionine(in) + ADP + phosphate + H(+). It catalyses the reaction D-methionine(out) + ATP + H2O = D-methionine(in) + ADP + phosphate + H(+). In terms of biological role, part of the ABC transporter complex MetNIQ involved in methionine import. Responsible for energy coupling to the transport system. This is Methionine import ATP-binding protein MetN from Ligilactobacillus salivarius (strain UCC118) (Lactobacillus salivarius).